The primary structure comprises 369 residues: MPSDFPPGQAGIHARFRVDYPEFSLDVDLRLPGRGVTALFGQSGSGKTTCLRCMAGLAPVSDGYLDINGEVWLDSAARRAVPTHKRALGYVFQEASLFEHLDVLANLRYGMKRVPPALRRVDLEQATGLLGIGHLLARMPAGLSGGERQRVGIARALLTSPRLLLMDEPLAALDVQRKREILPYLERLHDELDIPVIYVSHSPDEVARLADHLVLLEQGRAVASGPLDALLTRLDLPMAMTDDASVVVTGEAAGFDPGYALLTLQLPGGRARLRFVHQAAPAGQRLRVVVHARDVSLALQQPREGSILNVLAVRVLEMAPAANPAHVMVRLDADGTPLLARITRYSRDRLALAPGMQAWAQIKAVSLLA.

Residues 7–243 (PGQAGIHARF…LDLPMAMTDD (237 aa)) enclose the ABC transporter domain. Position 41–48 (41–48 (GQSGSGKT)) interacts with ATP. In terms of domain architecture, Mop spans 304 to 369 (EGSILNVLAV…AQIKAVSLLA (66 aa)).

It belongs to the ABC transporter superfamily. Molybdate importer (TC 3.A.1.8) family. In terms of assembly, the complex is composed of two ATP-binding proteins (ModC), two transmembrane proteins (ModB) and a solute-binding protein (ModA).

It is found in the cell inner membrane. The catalysed reaction is molybdate(out) + ATP + H2O = molybdate(in) + ADP + phosphate + H(+). In terms of biological role, part of the ABC transporter complex ModABC involved in molybdenum import. Responsible for energy coupling to the transport system. This is Molybdenum import ATP-binding protein ModC from Bordetella bronchiseptica (strain ATCC BAA-588 / NCTC 13252 / RB50) (Alcaligenes bronchisepticus).